The following is a 446-amino-acid chain: Trigger factor (446 aa).

A PPIase FKBP-type domain is found at 161–246 (GDRLTIDFKG…VSKVERSELP (86 aa)). Positions 422–446 (VSYEDAVKPRTAPAEQAEDGEQSAE) are disordered. Residues 437 to 446 (QAEDGEQSAE) show a composition bias toward acidic residues.

Belongs to the FKBP-type PPIase family. Tig subfamily.

The protein localises to the cytoplasm. The catalysed reaction is [protein]-peptidylproline (omega=180) = [protein]-peptidylproline (omega=0). In terms of biological role, involved in protein export. Acts as a chaperone by maintaining the newly synthesized protein in an open conformation. Functions as a peptidyl-prolyl cis-trans isomerase. The polypeptide is Trigger factor (Hahella chejuensis (strain KCTC 2396)).